The sequence spans 279 residues: Putative pyruvate, phosphate dikinase regulatory protein (279 aa).

153–160 (GISRTSKT) is a binding site for ADP.

Belongs to the pyruvate, phosphate/water dikinase regulatory protein family. PDRP subfamily.

It carries out the reaction N(tele)-phospho-L-histidyl/L-threonyl-[pyruvate, phosphate dikinase] + ADP = N(tele)-phospho-L-histidyl/O-phospho-L-threonyl-[pyruvate, phosphate dikinase] + AMP + H(+). The catalysed reaction is N(tele)-phospho-L-histidyl/O-phospho-L-threonyl-[pyruvate, phosphate dikinase] + phosphate + H(+) = N(tele)-phospho-L-histidyl/L-threonyl-[pyruvate, phosphate dikinase] + diphosphate. Functionally, bifunctional serine/threonine kinase and phosphorylase involved in the regulation of the pyruvate, phosphate dikinase (PPDK) by catalyzing its phosphorylation/dephosphorylation. The protein is Putative pyruvate, phosphate dikinase regulatory protein of Brucella abortus (strain 2308).